We begin with the raw amino-acid sequence, 370 residues long: tRNA-specific 2-thiouridylase MnmA (370 aa).

Residues 19 to 26 (AMSGGVDS) and Leu45 each bind ATP. Residue Cys113 is the Nucleophile of the active site. A disulfide bridge links Cys113 with Cys209. Gly137 serves as a coordination point for ATP. Residues 159 to 161 (KDQ) are interaction with tRNA. Cys209 (cysteine persulfide intermediate) is an active-site residue.

This sequence belongs to the MnmA/TRMU family.

Its subcellular location is the cytoplasm. It catalyses the reaction S-sulfanyl-L-cysteinyl-[protein] + uridine(34) in tRNA + AH2 + ATP = 2-thiouridine(34) in tRNA + L-cysteinyl-[protein] + A + AMP + diphosphate + H(+). Catalyzes the 2-thiolation of uridine at the wobble position (U34) of tRNA, leading to the formation of s(2)U34. The protein is tRNA-specific 2-thiouridylase MnmA of Rickettsia conorii (strain ATCC VR-613 / Malish 7).